Here is an 84-residue protein sequence, read N- to C-terminus: Toluene-4-monooxygenase system, hydroxylase component subunit gamma (84 aa).

The protein belongs to the TmoB/XamoB family. The alkene monooxygenase multicomponent enzyme system is composed of an electron transfer component and a monooxygenase component interacting with the effector protein TmoD. The electron transfer component is composed of a ferredoxin reductase (TmoF) and a ferredoxin (TmoC), and the monooxygenase component is formed by a heterohexamer (dimer of heterotrimers) of two alpha subunits (TmoA), two beta subunits (TmoE) and two gamma subunits (TmoB).

It carries out the reaction toluene + NADH + O2 + H(+) = 4-methylphenol + NAD(+) + H2O. It functions in the pathway xenobiotic degradation; toluene degradation. Inhibited by Zn(2+) and Cu(2+). Its function is as follows. Component of the toluene-4-monooxygenase multicomponent enzyme system which catalyzes the O2- and NADH-dependent hydroxylation of toluene to form p-cresol. Also able to convert benzene to phenol, catechol, and 1,2,3-trihydroxybenzene by successive hydroxylations. The sequence is that of Toluene-4-monooxygenase system, hydroxylase component subunit gamma from Ectopseudomonas mendocina (Pseudomonas mendocina).